Reading from the N-terminus, the 343-residue chain is Aspartate carbamoyltransferase catalytic subunit (343 aa).

Carbamoyl phosphate-binding residues include Arg91 and Thr92. Residue Lys119 coordinates L-aspartate. Carbamoyl phosphate-binding residues include Arg141, His171, and Gln174. Residues Arg204 and Arg259 each coordinate L-aspartate. The carbamoyl phosphate site is built by Gly300 and Pro301.

It belongs to the aspartate/ornithine carbamoyltransferase superfamily. ATCase family. In terms of assembly, heterododecamer (2C3:3R2) of six catalytic PyrB chains organized as two trimers (C3), and six regulatory PyrI chains organized as three dimers (R2).

The catalysed reaction is carbamoyl phosphate + L-aspartate = N-carbamoyl-L-aspartate + phosphate + H(+). It participates in pyrimidine metabolism; UMP biosynthesis via de novo pathway; (S)-dihydroorotate from bicarbonate: step 2/3. Catalyzes the condensation of carbamoyl phosphate and aspartate to form carbamoyl aspartate and inorganic phosphate, the committed step in the de novo pyrimidine nucleotide biosynthesis pathway. The polypeptide is Aspartate carbamoyltransferase catalytic subunit (Burkholderia ambifaria (strain MC40-6)).